Reading from the N-terminus, the 195-residue chain is Ureidoglycolate lyase (195 aa).

The protein belongs to the ureidoglycolate lyase family. Homodimer.

The enzyme catalyses (S)-ureidoglycolate = urea + glyoxylate. It functions in the pathway nitrogen metabolism; (S)-allantoin degradation. Its function is as follows. Catalyzes the catabolism of the allantoin degradation intermediate (S)-ureidoglycolate, generating urea and glyoxylate. Involved in the utilization of allantoin as secondary nitrogen source when primary sources are limiting. The chain is Ureidoglycolate lyase (DAL3) from Saccharomyces cerevisiae (strain ATCC 204508 / S288c) (Baker's yeast).